The sequence spans 412 residues: Probable serine/threonine-protein kinase PBL4 (412 aa).

Gly2 is lipidated: N-myristoyl glycine. A lipid anchor (S-palmitoyl cysteine) is attached at Cys4. Positions 14–40 (RESPYRGSSRISAKRSQSSRLSSLTIQ) are disordered. Residues 21 to 40 (SSRISAKRSQSSRLSSLTIQ) are compositionally biased toward low complexity. Thr72 bears the Phosphothreonine mark. The 287-residue stretch at 83 to 369 (FRPDSVIGEG…STLEELEMTL (287 aa)) folds into the Protein kinase domain. ATP is bound by residues 89–97 (IGEGGFGYV) and Lys121. Tyr167 is subject to Phosphotyrosine. The active-site Proton acceptor is the Asp215. Residues Ser219 and Ser249 each carry the phosphoserine modification. Residues Thr250 and Thr255 each carry the phosphothreonine modification. Residue Tyr263 is modified to Phosphotyrosine.

This sequence belongs to the protein kinase superfamily. Ser/Thr protein kinase family.

It localises to the cell membrane. The enzyme catalyses L-seryl-[protein] + ATP = O-phospho-L-seryl-[protein] + ADP + H(+). It carries out the reaction L-threonyl-[protein] + ATP = O-phospho-L-threonyl-[protein] + ADP + H(+). Its function is as follows. May be involved in plant defense signaling. The protein is Probable serine/threonine-protein kinase PBL4 of Arabidopsis thaliana (Mouse-ear cress).